The sequence spans 558 residues: Atlastin-1 (558 aa).

The interval 1 to 27 (MAKNRRDRNSWGGFSEKTYEWSSEEEE) is disordered. Residues 1-34 (MAKNRRDRNSWGGFSEKTYEWSSEEEEPVKKAGP) are N-terminal hypervariable region (HVR). The Cytoplasmic segment spans residues 1-449 (MAKNRRDRNS…NIFHAARTPA (449 aa)). Phosphoserine occurs at positions 10, 22, and 23. The region spanning 64–309 (DKEVVAVSVA…LIPWLLSPES (246 aa)) is the GB1/RHD3-type G domain. Residues Arg-77, Lys-78, Gly-79, Lys-80, Ser-81, Phe-82, Gln-148, Arg-217, Asp-218, Val-276, and Asn-279 each contribute to the GDP site. Residues Arg-77, Lys-78, Gly-79, Lys-80, Ser-81, and Phe-82 each coordinate GTP. Mg(2+) is bound at residue Ser-81. GTP contacts are provided by Arg-217, Asp-218, and Val-276. Residues 347–438 (MLQATAEANN…YIQYIKHNDS (92 aa)) are 3HB (three-helix bundle) domain. Lys-395 carries the N6-acetyllysine modification. Residues 412 to 439 (EFSRRYLQQLESEIDELYIQYIKHNDSK) adopt a coiled-coil conformation. Residues 439–447 (KNIFHAART) are linker. The helical transmembrane segment at 450 to 470 (TLFVVIFITYVIAGVTGFIGL) threads the bilayer. Residue Asp-471 is a topological domain, lumenal. A helical transmembrane segment spans residues 472–492 (IIASLCNMIMGLTLITLCTWA). At 493–558 (YIRYSGEYRE…STEQSEKKKM (66 aa)) the chain is on the cytoplasmic side. Residues 521–558 (NEALYKLYSAAATHRHLYHQAFPTPKSESTEQSEKKKM) form an autoinhibitory domain region.

The protein belongs to the TRAFAC class dynamin-like GTPase superfamily. GB1/RHD3 GTPase family. GB1 subfamily. In terms of assembly, monomeric and homodimeric. The homodimer, transiently formed by two molecules on opposing membranes, is the active form mediating ER membrane fusion. Interacts with REEP1, REEP5, RTN3 and RTN4 (via the transmembrane region); these proteins are involved in endoplasmic reticulum tubular network organization. Interacts with ZFYVE27; both proteins are involved in endoplasmic reticulum tubular network organization. Interacts with ARL6IP1; both proteins are involved in endoplasmic reticulum tubular network organization. Interacts with SPAST; the interaction is direct, could recruit SPAST to Golgi membranes. Interacts (via N-terminal region) with MAP4K4 (via CNH regulatory domain). May interact with TMED2. Interacts with CPT1C. In terms of processing, phosphorylated. Phosphorylation, by different kinases, of the N-terminal hypervariable region (HVR) regulates the ATL1-mediated membrane tethering step.

It is found in the endoplasmic reticulum membrane. Its subcellular location is the golgi apparatus membrane. The protein resides in the cell projection. The protein localises to the axon. It carries out the reaction GTP + H2O = GDP + phosphate + H(+). In terms of biological role, atlastin-1 (ATL1) is a membrane-anchored GTPase that mediates the GTP-dependent fusion of endoplasmic reticulum (ER) membranes, maintaining the continuous ER network. It facilitates the formation of three-way junctions where ER tubules intersect. Two atlastin-1 on neighboring ER tubules bind GTP and form loose homodimers through the GB1/RHD3-type G domains and 3HB regions. Upon GTP hydrolysis, the 3HB regions tighten, pulling the membranes together to drive their fusion. After fusion, the homodimer disassembles upon release of inorganic phosphate (Pi). Subsequently, GDP dissociates, resetting the monomers to a conformation ready for a new fusion cycle. May also regulate more or less directly Golgi biogenesis. Indirectly regulates axonal development. In Pongo abelii (Sumatran orangutan), this protein is Atlastin-1.